Reading from the N-terminus, the 246-residue chain is Transmembrane and ubiquitin-like domain-containing protein 1 (246 aa).

The segment at 2-30 is required to release iHOPS from membranes; it reads ALIEGVGDEVTILFSALACLLVLALAWVS. The helical transmembrane segment at 11-31 threads the bilayer; that stretch reads VTILFSALACLLVLALAWVST. A disordered region spans residues 35–102; that stretch reads EGADPLPQPS…PPPPDSPQEP (68 aa). Over residues 40-50 the composition is skewed to pro residues; it reads LPQPSGTPTPT. Phosphothreonine occurs at positions 71 and 92. S98 and S127 each carry phosphoserine. In terms of domain architecture, Ubiquitin-like spans 103-176; that stretch reads LVLRLKFLND…LHCHVSTRVG (74 aa). 2 consecutive transmembrane segments (helical) span residues 195–215 and 221–241; these read VGSLLLPLLLLLLLLLWYCQI and FPLTATLGLAGFTLLLSLLAF.

Interacts with EEF1A1, GRIA2, GRIP1, CAMLG, TUBG1. Interacts with NPM1 and CDKN2A; TMUB1 can enhance interaction between NPM1 and CDKN2A and is proposed to bridge the proteins; proposed to be mediated by iHOPS. Interacts with ERLIN2 and AMFR; TMUB1 promotes the interaction of ERLIN2 with AMFR. In terms of processing, processed by regulated intramembrane proteolysis (RIP) in the N-terminus to release iHOPS from membranes.

The protein resides in the membrane. The protein localises to the postsynaptic cell membrane. It localises to the recycling endosome. Its subcellular location is the cytoplasm. It is found in the nucleus. The protein resides in the nucleolus. The protein localises to the cytoskeleton. It localises to the microtubule organizing center. Its subcellular location is the centrosome. Involved in sterol-regulated ubiquitination and degradation of HMG-CoA reductase HMGCR. Involved in positive regulation of AMPA-selective glutamate receptor GRIA2 recycling to the cell surface. Acts as negative regulator of hepatocyte growth during regeneration. In terms of biological role, may contribute to the regulation of translation during cell-cycle progression. May contribute to the regulation of cell proliferation. May be involved in centrosome assembly. Modulates stabilization and nucleolar localization of tumor suppressor CDKN2A and enhances association between CDKN2A and NPM1. This Bos taurus (Bovine) protein is Transmembrane and ubiquitin-like domain-containing protein 1 (TMUB1).